The primary structure comprises 331 residues: (+)-aristolochene synthase TS1 (331 aa).

Positions 1–22 (MTRMKNSSSNVTSASGSGSGSG) are disordered. Residues 7–16 (SSSNVTSASG) are compositionally biased toward low complexity. Mg(2+)-binding residues include Asp-102, Asn-231, Ser-235, and Glu-239. The DDxx(x)D/E motif motif lies at 102-106 (DDLLE). An NDxxSxxxD/E motif motif is present at residues 231–239 (NDVYSYEKE). 2 residues coordinate (2E,6E)-farnesyl diphosphate: Arg-326 and Tyr-327.

It belongs to the terpene synthase family. In terms of assembly, homodimer. It depends on Mg(2+) as a cofactor.

The catalysed reaction is (2E,6E)-farnesyl diphosphate = (+)-aristolochene + diphosphate. It participates in sesquiterpene biosynthesis; aristolochene biosynthesis; aristolochene from farnesyl diphosphate: step 1/1. In terms of biological role, catalyzes the cyclization of trans,trans-farnesyl diphosphate (FPP) to the bicyclic sesquiterpene aristolochene. Aristolochene is the likely parent compound for a number of sesquiterpenoid toxins produced by filamentous fungi. This Penicillium expansum (Blue mold rot fungus) protein is (+)-aristolochene synthase TS1.